The sequence spans 140 residues: uncharacterized protein (140 aa).

This is an uncharacterized protein from Archaeoglobus fulgidus (strain ATCC 49558 / DSM 4304 / JCM 9628 / NBRC 100126 / VC-16).